Consider the following 315-residue polypeptide: MIEIEKPKIECVVCSEDNRYGKFVVEPLERGYGITLGNSLRRILLSSLPGVAVTSIKIDGILHEFSTIPGVIEDVTEIILNIKELSLNFHGEGPKVIYIDAEGEGEVKAKDIKADADVEILNPEHKIATLSGDHRLYMEMTIDKGRGYVSAEKNKHPGQPIGVIPVDSIFTPVHKVNYTVENTRVGQVTDYDKLTLEVWTNGSIKPDEAISLGAKILSEHLNLFIDLSDNAKNAEIMVEKEETKKEKVLEMTIEELDLSVRSYNCLKRAGINTVEDLISRTEEDMMKVRNLGRKSLEEVVNKLKALGLSLAPSED.

An alpha N-terminal domain (alpha-NTD) region spans residues 1-228; the sequence is MIEIEKPKIE…EHLNLFIDLS (228 aa). The alpha C-terminal domain (alpha-CTD) stretch occupies residues 245–315; it reads KEKVLEMTIE…LGLSLAPSED (71 aa).

It belongs to the RNA polymerase alpha chain family. In terms of assembly, homodimer. The RNAP catalytic core consists of 2 alpha, 1 beta, 1 beta' and 1 omega subunit. When a sigma factor is associated with the core the holoenzyme is formed, which can initiate transcription.

It carries out the reaction RNA(n) + a ribonucleoside 5'-triphosphate = RNA(n+1) + diphosphate. In terms of biological role, DNA-dependent RNA polymerase catalyzes the transcription of DNA into RNA using the four ribonucleoside triphosphates as substrates. This is DNA-directed RNA polymerase subunit alpha from Acetivibrio thermocellus (strain ATCC 27405 / DSM 1237 / JCM 9322 / NBRC 103400 / NCIMB 10682 / NRRL B-4536 / VPI 7372) (Clostridium thermocellum).